The following is a 100-amino-acid chain: Urease subunit gamma (100 aa).

It belongs to the urease gamma subunit family. As to quaternary structure, heterotrimer of UreA (gamma), UreB (beta) and UreC (alpha) subunits. Three heterotrimers associate to form the active enzyme.

Its subcellular location is the cytoplasm. The enzyme catalyses urea + 2 H2O + H(+) = hydrogencarbonate + 2 NH4(+). It participates in nitrogen metabolism; urea degradation; CO(2) and NH(3) from urea (urease route): step 1/1. The chain is Urease subunit gamma from Prochlorococcus marinus (strain MIT 9313).